Consider the following 513-residue polypeptide: Sterol 14-alpha demethylase rstn2 (513 aa).

A helical membrane pass occupies residues 3 to 23; the sequence is WPLIGAYALLAFVAIIALNVT. Cysteine 453 serves as a coordination point for heme.

Belongs to the cytochrome P450 family. Requires heme as cofactor.

Its subcellular location is the membrane. The enzyme catalyses a 14alpha-methyl steroid + 3 reduced [NADPH--hemoprotein reductase] + 3 O2 = a Delta(14) steroid + formate + 3 oxidized [NADPH--hemoprotein reductase] + 4 H2O + 4 H(+). It catalyses the reaction a 14alpha-methyl steroid + reduced [NADPH--hemoprotein reductase] + O2 = a 14alpha-hydroxymethyl steroid + oxidized [NADPH--hemoprotein reductase] + H2O + H(+). The catalysed reaction is a 14alpha-hydroxymethyl steroid + reduced [NADPH--hemoprotein reductase] + O2 = a 14alpha-formyl steroid + oxidized [NADPH--hemoprotein reductase] + 2 H2O + H(+). It carries out the reaction a 14alpha-formyl steroid + reduced [NADPH--hemoprotein reductase] + O2 = a Delta(14) steroid + formate + oxidized [NADPH--hemoprotein reductase] + H2O + 2 H(+). The enzyme catalyses lanosterol + 3 reduced [NADPH--hemoprotein reductase] + 3 O2 = 4,4-dimethyl-5alpha-cholesta-8,14,24-trien-3beta-ol + formate + 3 oxidized [NADPH--hemoprotein reductase] + 4 H2O + 4 H(+). It catalyses the reaction lanosterol + reduced [NADPH--hemoprotein reductase] + O2 = 32-hydroxylanosterol + oxidized [NADPH--hemoprotein reductase] + H2O + H(+). The catalysed reaction is 32-hydroxylanosterol + reduced [NADPH--hemoprotein reductase] + O2 = 32-oxolanosterol + oxidized [NADPH--hemoprotein reductase] + 2 H2O + H(+). It carries out the reaction 32-oxolanosterol + reduced [NADPH--hemoprotein reductase] + O2 = 4,4-dimethyl-5alpha-cholesta-8,14,24-trien-3beta-ol + formate + oxidized [NADPH--hemoprotein reductase] + H2O + 2 H(+). The enzyme catalyses eburicol + 3 reduced [NADPH--hemoprotein reductase] + 3 O2 = 14-demethyleburicol + formate + 3 oxidized [NADPH--hemoprotein reductase] + 4 H2O + 4 H(+). It catalyses the reaction eburicol + reduced [NADPH--hemoprotein reductase] + O2 = 32-hydroxyeburicol + oxidized [NADPH--hemoprotein reductase] + H2O + H(+). The catalysed reaction is 32-hydroxyeburicol + reduced [NADPH--hemoprotein reductase] + O2 = 32-oxoeburicol + oxidized [NADPH--hemoprotein reductase] + 2 H2O + H(+). It carries out the reaction 32-oxoeburicol + reduced [NADPH--hemoprotein reductase] + O2 = 14-demethyleburicol + formate + oxidized [NADPH--hemoprotein reductase] + H2O + 2 H(+). Its pathway is steroid biosynthesis; sterol biosynthesis. Sterol 14-alpha demethylase; part of the gene cluster that mediates the biosynthesis of the tetrahydropyranyl antifungal agent restricticin that acts as an inhibitor of CYP51 and blocks the ergosterol biosynthesis. Sterol 14-alpha-demethylase plays a critical role in the biosynthesis of ergosterol, the major sterol component in fungal membranes that participates in a variety of functions. Rtsn2 acts as a self-resistant CYP51 that contains mutations found in CYP51s isolated from azole resistance strains and that is not inhibited by the final product of the cluster, restricticin. This is Sterol 14-alpha demethylase rstn2 from Aspergillus nomiae NRRL (strain ATCC 15546 / NRRL 13137 / CBS 260.88 / M93).